The following is a 254-amino-acid chain: Ribosomal RNA small subunit methyltransferase A (254 aa).

Positions 12, 14, 38, 59, 83, and 100 each coordinate S-adenosyl-L-methionine.

It belongs to the class I-like SAM-binding methyltransferase superfamily. rRNA adenine N(6)-methyltransferase family. RsmA subfamily.

The protein resides in the cytoplasm. It carries out the reaction adenosine(1518)/adenosine(1519) in 16S rRNA + 4 S-adenosyl-L-methionine = N(6)-dimethyladenosine(1518)/N(6)-dimethyladenosine(1519) in 16S rRNA + 4 S-adenosyl-L-homocysteine + 4 H(+). Functionally, specifically dimethylates two adjacent adenosines (A1518 and A1519) in the loop of a conserved hairpin near the 3'-end of 16S rRNA in the 30S particle. May play a critical role in biogenesis of 30S subunits. The sequence is that of Ribosomal RNA small subunit methyltransferase A from Mycoplasma mobile (strain ATCC 43663 / 163K / NCTC 11711) (Mesomycoplasma mobile).